The chain runs to 663 residues: Transketolase 2 (663 aa).

His25 serves as a coordination point for substrate. Residues His65 and 113 to 115 contribute to the thiamine diphosphate site; that span reads GPL. Asp154 is a binding site for Mg(2+). Thiamine diphosphate is bound by residues Gly155 and Asn184. Residues Asn184 and Ile186 each coordinate Mg(2+). His259, Arg356, and Ser383 together coordinate substrate. His259 serves as a coordination point for thiamine diphosphate. The active-site Proton donor is Glu410. Phe436 contributes to the thiamine diphosphate binding site. Substrate-binding residues include His460, Asp468, and Arg519.

This sequence belongs to the transketolase family. Homodimer. It depends on Mg(2+) as a cofactor. The cofactor is Ca(2+). Mn(2+) is required as a cofactor. Co(2+) serves as cofactor. Requires thiamine diphosphate as cofactor.

It catalyses the reaction D-sedoheptulose 7-phosphate + D-glyceraldehyde 3-phosphate = aldehydo-D-ribose 5-phosphate + D-xylulose 5-phosphate. In terms of biological role, catalyzes the transfer of a two-carbon ketol group from a ketose donor to an aldose acceptor, via a covalent intermediate with the cofactor thiamine pyrophosphate. In Vibrio parahaemolyticus serotype O3:K6 (strain RIMD 2210633), this protein is Transketolase 2 (tkt2).